Consider the following 1591-residue polypeptide: Mediator of RNA polymerase II transcription subunit 12 (1591 aa).

3 disordered regions span residues 1-116 (MIPH…LSWR), 132-176 (GAGE…AAGL), and 1488-1530 (NATL…SLGV). A compositionally biased stretch (polar residues) spans 40-53 (EQSSMPAPQPQTGP). Positions 66–80 (AQEREHPAKRLRLDI) are enriched in basic and acidic residues. The span at 99 to 108 (PKSTPVSTSS) shows a compositional bias: low complexity. The span at 151–162 (LSPPSFPAPPWK) shows a compositional bias: pro residues. Residues 1496–1512 (PSPAASGSTPAPTPSGS) are compositionally biased toward low complexity.

The protein belongs to the Mediator complex subunit 12 family. Component of the srb8-11 complex, which itself associates with the Mediator complex.

It localises to the nucleus. In terms of biological role, component of the srb8-11 complex. The srb8-11 complex is a regulatory module of the Mediator complex which is itself involved in regulation of basal and activated RNA polymerase II-dependent transcription. The srb8-11 complex may be involved in the transcriptional repression of a subset of genes regulated by Mediator. It may inhibit the association of the Mediator complex with RNA polymerase II to form the holoenzyme complex. This is Mediator of RNA polymerase II transcription subunit 12 (srb8) from Aspergillus clavatus (strain ATCC 1007 / CBS 513.65 / DSM 816 / NCTC 3887 / NRRL 1 / QM 1276 / 107).